We begin with the raw amino-acid sequence, 220 residues long: Adenylate kinase (220 aa).

ATP is bound at residue 12 to 17 (GAGKGT). An NMP region spans residues 32–62 (STGDIFRDIVKKENDELGKKIKEIMERGELV). Residues T33, R38, 60–62 (ELV), 88–91 (GYPR), and Q95 each bind AMP. The LID stretch occupies residues 129-166 (ARRICPKCGRIYNLISLPPKEDELCDDCKVKLVQREDD). R130 contacts ATP. C133 and C136 together coordinate Zn(2+). An ATP-binding site is contributed by 139 to 140 (IY). Zn(2+) is bound by residues C153 and C156. AMP is bound by residues R163 and R174. An ATP-binding site is contributed by I202.

The protein belongs to the adenylate kinase family. As to quaternary structure, monomer.

The protein localises to the cytoplasm. It carries out the reaction AMP + ATP = 2 ADP. Its pathway is purine metabolism; AMP biosynthesis via salvage pathway; AMP from ADP: step 1/1. Catalyzes the reversible transfer of the terminal phosphate group between ATP and AMP. Plays an important role in cellular energy homeostasis and in adenine nucleotide metabolism. This Thermotoga maritima (strain ATCC 43589 / DSM 3109 / JCM 10099 / NBRC 100826 / MSB8) protein is Adenylate kinase.